A 224-amino-acid chain; its full sequence is MIKKFFITGTDTNVGKTIVSSILLKKATMSGYQTAGYKPVSSGGQKKSSGFFNQDAILLKKSSSIILSDREVNPIAFFENAPPHILSKFQKRSIKKEELSLGLSNITKKSNWILVEGAGGWYTPLSCKDTFSSWVKQEKLTVIIIIAIKLGCINHAILTEKAIISDQIKCGGWIANNIFPKDKYNMHYIQTLLNYIKSPFLGVVPYFKNKNRINFKKIKIKLPK.

Residue Asn13–Ile18 coordinates ATP. Thr17 is a binding site for Mg(2+). Lys38 is a catalytic residue. A substrate-binding site is contributed by Ser42. ATP is bound by residues Asp55, Glu116–Gly119, Asn176–Asn177, and Asn211. Residues Asp55 and Glu116 each contribute to the Mg(2+) site.

It belongs to the dethiobiotin synthetase family. Homodimer. Requires Mg(2+) as cofactor.

The protein localises to the cytoplasm. It carries out the reaction (7R,8S)-7,8-diammoniononanoate + CO2 + ATP = (4R,5S)-dethiobiotin + ADP + phosphate + 3 H(+). It participates in cofactor biosynthesis; biotin biosynthesis; biotin from 7,8-diaminononanoate: step 1/2. Its function is as follows. Catalyzes a mechanistically unusual reaction, the ATP-dependent insertion of CO2 between the N7 and N8 nitrogen atoms of 7,8-diaminopelargonic acid (DAPA, also called 7,8-diammoniononanoate) to form a ureido ring. The polypeptide is ATP-dependent dethiobiotin synthetase BioD (Buchnera aphidicola subsp. Acyrthosiphon pisum (strain 5A)).